The following is a 243-amino-acid chain: Vesicle-associated membrane protein-associated protein B (243 aa).

Alanine 2 carries the post-translational modification N-acetylalanine. Topologically, residues 2–218 are cytoplasmic; it reads AKVEQVLSLE…PASAMAGKEE (217 aa). An MSP domain is found at 7–124; the sequence is VLSLEPQHEL…MDSKLRCVFE (118 aa). Residue serine 146 is modified to Phosphoserine. A Glycyl lysine isopeptide (Lys-Gly) (interchain with G-Cter in SUMO1) cross-link involves residue lysine 147. A Phosphothreonine modification is found at threonine 150. Residues serine 158, serine 159, and serine 160 each carry the phosphoserine modification. The stretch at 161-196 forms a coiled coil; sequence LDDTEVKKVMEECKRLQSEVQRLREENKQFKEEDGL. Basic and acidic residues predominate over residues 186-197; sequence ENKQFKEEDGLR. Residues 186–214 are disordered; sequence ENKQFKEEDGLRMRKTAQSNSPAPASAMA. Residue serine 206 is modified to Phosphoserine. A helical; Anchor for type IV membrane protein transmembrane segment spans residues 219 to 239; sequence GLSTRLLALVVLFFIVGVIIG.

Belongs to the VAMP-associated protein (VAP) (TC 9.B.17) family. As to quaternary structure, homodimer, and heterodimer with VAPA. Interacts with VAMP1 and VAMP2. Interacts (via MSP domain) with ZFYVE27. Interacts with RMDN3. Interacts with KIF5A in a ZFYVE27-dependent manner. Interacts (via MSP domain) with STARD3 (via phospho-FFAT motif). Interacts with STARD3NL (via FFAT motif). Interacts with CERT1. Interacts with PLEKHA3 and SACM1L to form a ternary complex. Interacts with VPS13A (via FFAT motif). Interacts with RB1CC1 (via phosphorylated FFAT motif), MIGA2 (via phosphorylated FFAT motif), RMDN3 (via phosphorylated FFAT motif), OSBPL1A (via FFAT motif), KCNB1 (via phosphorylated FFAT motif) and KCNB2 (via phosphorylated FFAT motif). Interacts (via MSP domain) with WDR44 (via FFAT motif); the interactions connect the endoplasmic reticulum (ER) with the endosomal tubule.

It localises to the endoplasmic reticulum membrane. Its function is as follows. Endoplasmic reticulum (ER)-anchored protein that mediates the formation of contact sites between the ER and endosomes via interaction with FFAT motif-containing proteins such as STARD3 or WDR44. Interacts with STARD3 in a FFAT motif phosphorylation dependent manner. Via interaction with WDR44 participates in neosynthesized protein export. Participates in the endoplasmic reticulum unfolded protein response (UPR) by inducing ERN1/IRE1 activity. Involved in cellular calcium homeostasis regulation. The sequence is that of Vesicle-associated membrane protein-associated protein B from Bos taurus (Bovine).